The chain runs to 398 residues: CCA-adding enzyme (398 aa).

2 residues coordinate ATP: G32 and R35. CTP contacts are provided by G32 and R35. Residues D45 and D47 each coordinate Mg(2+). R116, D159, R162, R165, and R168 together coordinate ATP. The CTP site is built by R116, D159, R162, R165, and R168.

The protein belongs to the tRNA nucleotidyltransferase/poly(A) polymerase family. Bacterial CCA-adding enzyme type 3 subfamily. Homodimer. The cofactor is Mg(2+).

It catalyses the reaction a tRNA precursor + 2 CTP + ATP = a tRNA with a 3' CCA end + 3 diphosphate. The catalysed reaction is a tRNA with a 3' CCA end + 2 CTP + ATP = a tRNA with a 3' CCACCA end + 3 diphosphate. In terms of biological role, catalyzes the addition and repair of the essential 3'-terminal CCA sequence in tRNAs without using a nucleic acid template. Adds these three nucleotides in the order of C, C, and A to the tRNA nucleotide-73, using CTP and ATP as substrates and producing inorganic pyrophosphate. tRNA 3'-terminal CCA addition is required both for tRNA processing and repair. Also involved in tRNA surveillance by mediating tandem CCA addition to generate a CCACCA at the 3' terminus of unstable tRNAs. While stable tRNAs receive only 3'-terminal CCA, unstable tRNAs are marked with CCACCA and rapidly degraded. The polypeptide is CCA-adding enzyme (Lactobacillus johnsonii (strain CNCM I-12250 / La1 / NCC 533)).